A 402-amino-acid chain; its full sequence is Protochlorophyllide reductase B, chloroplastic (402 aa).

It belongs to the short-chain dehydrogenases/reductases (SDR) family. POR subfamily.

The protein resides in the plastid. Its subcellular location is the chloroplast. The catalysed reaction is chlorophyllide a + NADP(+) = protochlorophyllide a + NADPH + H(+). Its pathway is porphyrin-containing compound metabolism; chlorophyll biosynthesis. Its function is as follows. Phototransformation of protochlorophyllide (Pchlide) to chlorophyllide (Chlide). The sequence is that of Protochlorophyllide reductase B, chloroplastic (PORB) from Oryza sativa subsp. japonica (Rice).